Consider the following 145-residue polypeptide: Alpha-amylase/trypsin inhibitor CM2 (145 aa).

A signal peptide spans 1 to 25 (MASKSSITHLLLAAVLVSVFAAAAA).

This sequence belongs to the protease inhibitor I6 (cereal trypsin/alpha-amylase inhibitor) family. As to expression, developing endosperm.

It localises to the secreted. Functionally, alpha-amylase/trypsin inhibitor. It could be involved in insect defense mechanisms. This is Alpha-amylase/trypsin inhibitor CM2 from Triticum aestivum (Wheat).